A 591-amino-acid chain; its full sequence is DEAD-box ATP-dependent RNA helicase 30 (591 aa).

Residues 1–109 are disordered; it reads MSSYDRRFAD…GRGGSSKREL (109 aa). Residues 72–103 show a composition bias toward gly residues; the sequence is FSVGRGGGRGGYGQYGDRNGGGNWGGGGGRGG. The Q motif signature appears at 165-193; the sequence is KMFQDANFPDNILEAIAKLGFTEPTPIQA. Residues 196–371 enclose the Helicase ATP-binding domain; the sequence is WPMALKGRDL…RQFLRDPYKA (176 aa). An ATP-binding site is contributed by 209–216; it reads AETGSGKT. Residues 319–322 carry the DEAD box motif; it reads DEAD. One can recognise a Helicase C-terminal domain in the interval 399 to 544; sequence RLLTLLKQLM…VVPPTLSALV (146 aa). The segment at 547 to 591 is disordered; sequence SGSGYGGSGGGRNFRPRGGGRGGGFGDKRSRSTSNFVPHGGKRTW. Over residues 549–571 the composition is skewed to gly residues; sequence SGYGGSGGGRNFRPRGGGRGGGF.

This sequence belongs to the DEAD box helicase family. DDX5/DBP2 subfamily.

The protein resides in the nucleus. It catalyses the reaction ATP + H2O = ADP + phosphate + H(+). Functionally, ATP-dependent RNA helicase involved nonsense-mediated mRNA decay and ribosome biogenesis through rRNA processing. The sequence is that of DEAD-box ATP-dependent RNA helicase 30 (RH30) from Arabidopsis thaliana (Mouse-ear cress).